We begin with the raw amino-acid sequence, 171 residues long: Inosine/xanthosine triphosphatase (171 aa).

A substrate-binding site is contributed by 8-13 (TTNPAK). Mg(2+) contacts are provided by glutamate 38 and glutamine 68.

The protein belongs to the YjjX NTPase family. In terms of assembly, homodimer. Requires Mg(2+) as cofactor. It depends on Mn(2+) as a cofactor.

The enzyme catalyses XTP + H2O = XDP + phosphate + H(+). It carries out the reaction ITP + H2O = IDP + phosphate + H(+). Its function is as follows. Phosphatase that hydrolyzes non-canonical purine nucleotides such as XTP and ITP to their respective diphosphate derivatives. Probably excludes non-canonical purines from DNA/RNA precursor pool, thus preventing their incorporation into DNA/RNA and avoiding chromosomal lesions. This chain is Inosine/xanthosine triphosphatase, found in Citrobacter koseri (strain ATCC BAA-895 / CDC 4225-83 / SGSC4696).